The following is a 469-amino-acid chain: 3-isopropylmalate dehydratase large subunit (469 aa).

Residues C347, C407, and C410 each coordinate [4Fe-4S] cluster.

It belongs to the aconitase/IPM isomerase family. LeuC type 1 subfamily. As to quaternary structure, heterodimer of LeuC and LeuD. It depends on [4Fe-4S] cluster as a cofactor.

It catalyses the reaction (2R,3S)-3-isopropylmalate = (2S)-2-isopropylmalate. It functions in the pathway amino-acid biosynthesis; L-leucine biosynthesis; L-leucine from 3-methyl-2-oxobutanoate: step 2/4. In terms of biological role, catalyzes the isomerization between 2-isopropylmalate and 3-isopropylmalate, via the formation of 2-isopropylmaleate. The protein is 3-isopropylmalate dehydratase large subunit of Prochlorococcus marinus (strain NATL2A).